Here is a 212-residue protein sequence, read N- to C-terminus: Large ribosomal subunit protein uL3 (212 aa).

The residue at position 153 (Q153) is an N5-methylglutamine.

It belongs to the universal ribosomal protein uL3 family. As to quaternary structure, part of the 50S ribosomal subunit. Forms a cluster with proteins L14 and L19. Post-translationally, methylated by PrmB.

Functionally, one of the primary rRNA binding proteins, it binds directly near the 3'-end of the 23S rRNA, where it nucleates assembly of the 50S subunit. In Shewanella halifaxensis (strain HAW-EB4), this protein is Large ribosomal subunit protein uL3.